We begin with the raw amino-acid sequence, 471 residues long: Cysteine--tRNA ligase (471 aa).

A Zn(2+)-binding site is contributed by Cys-30. The 'HIGH' region signature appears at 32-42 (PTVYNFAHIGN). Zn(2+)-binding residues include Cys-212, His-237, and Glu-241. A 'KMSKS' region motif is present at residues 270–274 (KMSKS). Lys-273 is an ATP binding site.

It belongs to the class-I aminoacyl-tRNA synthetase family. As to quaternary structure, monomer. Requires Zn(2+) as cofactor.

It is found in the cytoplasm. It catalyses the reaction tRNA(Cys) + L-cysteine + ATP = L-cysteinyl-tRNA(Cys) + AMP + diphosphate. The chain is Cysteine--tRNA ligase from Leptospira interrogans serogroup Icterohaemorrhagiae serovar copenhageni (strain Fiocruz L1-130).